A 1014-amino-acid chain; its full sequence is Isoleucine--tRNA ligase (1014 aa).

The 'HIGH' region motif lies at 48 to 58 (PTANGRPGIHH). A 'KMSKS' region motif is present at residues 628-632 (KMSKS). Lys631 is an ATP binding site.

It belongs to the class-I aminoacyl-tRNA synthetase family. IleS type 2 subfamily. Monomer. The cofactor is Zn(2+).

It is found in the cytoplasm. The enzyme catalyses tRNA(Ile) + L-isoleucine + ATP = L-isoleucyl-tRNA(Ile) + AMP + diphosphate. Catalyzes the attachment of isoleucine to tRNA(Ile). As IleRS can inadvertently accommodate and process structurally similar amino acids such as valine, to avoid such errors it has two additional distinct tRNA(Ile)-dependent editing activities. One activity is designated as 'pretransfer' editing and involves the hydrolysis of activated Val-AMP. The other activity is designated 'posttransfer' editing and involves deacylation of mischarged Val-tRNA(Ile). The protein is Isoleucine--tRNA ligase of Dehalococcoides mccartyi (strain CBDB1).